Here is a 344-residue protein sequence, read N- to C-terminus: Acireductone dioxygenase (344 aa).

4 residues coordinate Fe(2+): His92, His94, Glu98, and His137. 4 residues coordinate Ni(2+): His92, His94, Glu98, and His137.

Belongs to the acireductone dioxygenase (ARD) family. Fe(2+) is required as a cofactor. Requires Ni(2+) as cofactor.

The protein localises to the cytoplasm. The protein resides in the nucleus. It carries out the reaction 1,2-dihydroxy-5-(methylsulfanyl)pent-1-en-3-one + O2 = 4-methylsulfanyl-2-oxobutanoate + formate + 2 H(+). The enzyme catalyses 1,2-dihydroxy-5-(methylsulfanyl)pent-1-en-3-one + O2 = 3-(methylsulfanyl)propanoate + CO + formate + 2 H(+). It participates in amino-acid biosynthesis; L-methionine biosynthesis via salvage pathway; L-methionine from S-methyl-5-thio-alpha-D-ribose 1-phosphate: step 5/6. Its function is as follows. Catalyzes 2 different reactions between oxygen and the acireductone 1,2-dihydroxy-3-keto-5-methylthiopentene (DHK-MTPene) depending upon the metal bound in the active site. Fe-containing acireductone dioxygenase (Fe-ARD) produces formate and 2-keto-4-methylthiobutyrate (KMTB), the alpha-ketoacid precursor of methionine in the methionine recycle pathway. Ni-containing acireductone dioxygenase (Ni-ARD) produces methylthiopropionate, carbon monoxide and formate, and does not lie on the methionine recycle pathway. In Leishmania major, this protein is Acireductone dioxygenase.